The chain runs to 208 residues: Small ribosomal subunit protein uS4 (208 aa).

An S4 RNA-binding domain is found at 98–159 (LRLDNVVFRL…RSKKVVRITE (62 aa)).

It belongs to the universal ribosomal protein uS4 family. In terms of assembly, part of the 30S ribosomal subunit. Contacts protein S5. The interaction surface between S4 and S5 is involved in control of translational fidelity.

Its function is as follows. One of the primary rRNA binding proteins, it binds directly to 16S rRNA where it nucleates assembly of the body of the 30S subunit. In terms of biological role, with S5 and S12 plays an important role in translational accuracy. The sequence is that of Small ribosomal subunit protein uS4 from Anaeromyxobacter dehalogenans (strain 2CP-1 / ATCC BAA-258).